The primary structure comprises 2211 residues: Nonribosomal peptide synthetase 13 (2211 aa).

Residues Thr76–Pro475 form an adenylation 1 region. Residues Pro594 to Gln671 form the Carrier 1 domain. At Ser631 the chain carries O-(pantetheine 4'-phosphoryl)serine. A condensation 1 region spans residues Glu710–Val975. The interval Thr1169 to Arg1563 is adenylation 2. The region spanning Pro1677 to Ala1756 is the Carrier 2 domain. Residue Ser1714 is modified to O-(pantetheine 4'-phosphoryl)serine. Positions His1814–Ser2069 are condensation 2.

It belongs to the NRP synthetase family.

It carries out the reaction L-proline + L-tryptophan + 2 ATP = brevianamide F + 2 AMP + 2 diphosphate + 2 H(+). Its pathway is mycotoxin biosynthesis. Functionally, nonribosomal peptide synthetase; part of the gene cluster that mediates the biosynthesis of fumitremorgins, indole alkaloids that carry not only intriguing chemical structures, but also interesting biological and pharmacological activities. The biosynthesis of fumitremorgin-type alkaloids begins by condensation of the two amino acids L-tryptophan and L-proline to brevianamide F, catalyzed by the non-ribosomal peptide synthetase ftmA. Brevianamide F is then prenylated by the prenyltransferase ftmPT1/ftmB in the presence of dimethylallyl diphosphate, resulting in the formation of tryprostatin B. The three cytochrome P450 monooxygenases, ftmP450-1/ftmC, ftmP450-2/ftmE and ftmP450-3/FtmG, are responsible for the conversion of tryprostatin B to 6-hydroxytryprostatin B, tryprostatin A to fumitremorgin C and fumitremorgin C to 12,13-dihydroxyfumitremorgin C, respectively. The putative methyltransferase ftmMT/ftmD is expected for the conversion of 6-hydroxytryprostatin B to tryprostatin A. FtmPT2/FtmH catalyzes the prenylation of 12,13-dihydroxyfumitre-morgin C in the presence of dimethylallyl diphosphate, resulting in the formation of fumitremorgin B. Fumitremorgin B is further converted to verruculogen by ftmOx1/ftmF via the insertion of an endoperoxide bond between the two prenyl moieties. In some fungal species, verruculogen is further converted to fumitremorgin A, but the enzymes involved in this step have not been identified yet. This chain is Nonribosomal peptide synthetase 13, found in Aspergillus fumigatus (strain ATCC MYA-4609 / CBS 101355 / FGSC A1100 / Af293) (Neosartorya fumigata).